The sequence spans 280 residues: UBX domain-containing protein 10 (280 aa).

The interval 41–94 (SAKGRTRPSLQKSQGVEVCAHHIPSPPPAIPYELPSSQKPGACAPKSPNQGASD) is disordered. Serine 87 is modified (phosphoserine). The region spanning 194–271 (DQEPRLLLAV…RIPHKSVLGI (78 aa)) is the UBX domain.

This sequence belongs to the UBXN10 family. As to quaternary structure, interacts with CLUAP1; the interaction is direct and mediates interaction with the intraflagellar transport complex B (IFT-B). Interacts with VCP; the interaction is direct.

It is found in the cell projection. The protein localises to the cilium. VCP/p97-binding protein required for ciliogenesis. Acts as a tethering factor that facilitates recruitment of VCP/p97 to the intraflagellar transport complex B (IFT-B) in cilia. UBX domain-containing proteins act as tethering factors for VCP/p97 and may specify substrate specificity of VCP/p97. The sequence is that of UBX domain-containing protein 10 from Homo sapiens (Human).